Consider the following 210-residue polypeptide: 3-hexulose-6-phosphate synthase (210 aa).

The protein belongs to the HPS/KGPDC family. HPS subfamily.

It catalyses the reaction D-ribulose 5-phosphate + formaldehyde = D-arabino-hex-3-ulose 6-phosphate. Its pathway is one-carbon metabolism; formaldehyde assimilation via RuMP pathway; D-fructose 6-phosphate from D-ribulose 5-phosphate and formaldehyde: step 1/2. Catalyzes the condensation of ribulose 5-phosphate with formaldehyde to form 3-hexulose 6-phosphate. The polypeptide is 3-hexulose-6-phosphate synthase (Staphylococcus aureus (strain MRSA252)).